A 470-amino-acid chain; its full sequence is Ribosomal protein uS12 methylthiotransferase RimO (470 aa).

An MTTase N-terminal domain is found at 20-131 (PTVAFAHLGC…IVEVLQQVEA (112 aa)). Residues cysteine 29, cysteine 65, cysteine 94, cysteine 169, cysteine 173, and cysteine 176 each coordinate [4Fe-4S] cluster. Positions 155–384 (TTGEAVAYLK…MTLQQPISAA (230 aa)) constitute a Radical SAM core domain. Positions 387 to 458 (ASWIGKTVDV…IYDLSGHVVS (72 aa)) constitute a TRAM domain.

This sequence belongs to the methylthiotransferase family. RimO subfamily. It depends on [4Fe-4S] cluster as a cofactor.

Its subcellular location is the cytoplasm. The enzyme catalyses L-aspartate(89)-[ribosomal protein uS12]-hydrogen + (sulfur carrier)-SH + AH2 + 2 S-adenosyl-L-methionine = 3-methylsulfanyl-L-aspartate(89)-[ribosomal protein uS12]-hydrogen + (sulfur carrier)-H + 5'-deoxyadenosine + L-methionine + A + S-adenosyl-L-homocysteine + 2 H(+). Functionally, catalyzes the methylthiolation of an aspartic acid residue of ribosomal protein uS12. This Synechococcus sp. (strain CC9311) protein is Ribosomal protein uS12 methylthiotransferase RimO.